A 603-amino-acid polypeptide reads, in one-letter code: Sulfoacetaldehyde acetyltransferase (603 aa).

The protein belongs to the TPP enzyme family. As to quaternary structure, homodimer or homotetramer. Mg(2+) is required as a cofactor. Thiamine diphosphate serves as cofactor.

It is found in the cytoplasm. It carries out the reaction acetyl phosphate + sulfite + H(+) = sulfoacetaldehyde + phosphate. It participates in organosulfur degradation; taurine degradation via aerobic pathway; acetyl phosphate and sulfite from taurine: step 2/2. The sequence is that of Sulfoacetaldehyde acetyltransferase (xsc) from Alcaligenes xylosoxydans xylosoxydans (Achromobacter xylosoxidans).